A 125-amino-acid polypeptide reads, in one-letter code: Glycine cleavage system H protein (125 aa).

Residues 19–101 form the Lipoyl-binding domain; that stretch reads IATIGITDYA…MGDGWFIKLR (83 aa). N6-lipoyllysine is present on lysine 60.

It belongs to the GcvH family. The glycine cleavage system is composed of four proteins: P, T, L and H. It depends on (R)-lipoate as a cofactor.

Its function is as follows. The glycine cleavage system catalyzes the degradation of glycine. The H protein shuttles the methylamine group of glycine from the P protein to the T protein. The protein is Glycine cleavage system H protein of Parvibaculum lavamentivorans (strain DS-1 / DSM 13023 / NCIMB 13966).